We begin with the raw amino-acid sequence, 142 residues long: Phosphoribosyl-AMP cyclohydrolase (142 aa).

Asp-92 contacts Mg(2+). Cys-93 contributes to the Zn(2+) binding site. 2 residues coordinate Mg(2+): Asp-94 and Asp-96. Cys-109 and Cys-116 together coordinate Zn(2+).

It belongs to the PRA-CH family. In terms of assembly, homodimer. Requires Mg(2+) as cofactor. It depends on Zn(2+) as a cofactor.

It localises to the cytoplasm. The enzyme catalyses 1-(5-phospho-beta-D-ribosyl)-5'-AMP + H2O = 1-(5-phospho-beta-D-ribosyl)-5-[(5-phospho-beta-D-ribosylamino)methylideneamino]imidazole-4-carboxamide. Its pathway is amino-acid biosynthesis; L-histidine biosynthesis; L-histidine from 5-phospho-alpha-D-ribose 1-diphosphate: step 3/9. In terms of biological role, catalyzes the hydrolysis of the adenine ring of phosphoribosyl-AMP. The chain is Phosphoribosyl-AMP cyclohydrolase from Alkalilimnicola ehrlichii (strain ATCC BAA-1101 / DSM 17681 / MLHE-1).